The sequence spans 169 residues: Disulfide bond formation protein B (169 aa).

Topologically, residues 1-13 are cytoplasmic; that stretch reads MQALNHFSRIRLS. A helical membrane pass occupies residues 14 to 30; sequence WFLLLLCIIFFEASALT. Residues 31 to 48 lie on the Periplasmic side of the membrane; that stretch reads FQHIMKLPPCVMCIYERV. The cysteines at positions 40 and 43 are disulfide-linked. The helical transmembrane segment at 49-64 threads the bilayer; the sequence is AMMGIGGAAIIGLLNP. Topologically, residues 65–71 are cytoplasmic; that stretch reads NNLIIRW. A helical transmembrane segment spans residues 72 to 89; it reads CGFIAWGISAGWGLKLAL. Over 90–144 the chain is Periplasmic; the sequence is EHVDFQLNPSPFSTCDLFVTFPSWAPLNKWAPWMFEAYGDCSKIVWQFLTLTMPQ. Cys-104 and Cys-130 are joined by a disulfide. Residues 145–163 traverse the membrane as a helical segment; sequence WLVIIFAGNLIALAIFVIA. Over 164–169 the chain is Cytoplasmic; the sequence is QFFNKK.

It belongs to the DsbB family.

It is found in the cell inner membrane. Functionally, required for disulfide bond formation in some periplasmic proteins. Acts by oxidizing the DsbA protein. The sequence is that of Disulfide bond formation protein B from Aliivibrio fischeri (strain ATCC 700601 / ES114) (Vibrio fischeri).